The sequence spans 87 residues: uncharacterized protein (87 aa).

This is an uncharacterized protein from Ureaplasma parvum serovar 3 (strain ATCC 700970).